Consider the following 125-residue polypeptide: MQKKHGITNMQKKHCITYIQSTFGNTIITLTDYNGNTKTWSSSGSVGFKGSRRSTNYAAQATAENAARVAIQLGFKFVEVRIKGLGYGKESSLRGLKLGGLIITKIRDVTPTPHNGCRPPKKRRV.

This sequence belongs to the universal ribosomal protein uS11 family.

The protein resides in the mitochondrion. The polypeptide is Small ribosomal subunit protein uS11m (RPS11) (Marchantia polymorpha (Common liverwort)).